The following is a 550-amino-acid chain: CTP synthase (550 aa).

The tract at residues 1–270 (MTKFVFVTGG…DRLICEELRL (270 aa)) is amidoligase domain. Ser-13 is a binding site for CTP. Ser-13 provides a ligand contact to UTP. ATP contacts are provided by residues 14 to 19 (SLGKGI) and Asp-71. Mg(2+)-binding residues include Asp-71 and Glu-144. CTP-binding positions include 151–153 (DIE), 191–196 (KTKPTQ), and Lys-227. Residues 191–196 (KTKPTQ) and Lys-227 each bind UTP. In terms of domain architecture, Glutamine amidotransferase type-1 spans 295–547 (TIGMVGKYVD…VEAALAGQQR (253 aa)). Gly-356 is an L-glutamine binding site. Cys-383 functions as the Nucleophile; for glutamine hydrolysis in the catalytic mechanism. L-glutamine-binding positions include 384–387 (LGMQ), Glu-407, and Arg-473. Residues His-520 and Glu-522 contribute to the active site.

It belongs to the CTP synthase family. In terms of assembly, homotetramer.

It catalyses the reaction UTP + L-glutamine + ATP + H2O = CTP + L-glutamate + ADP + phosphate + 2 H(+). The catalysed reaction is L-glutamine + H2O = L-glutamate + NH4(+). It carries out the reaction UTP + NH4(+) + ATP = CTP + ADP + phosphate + 2 H(+). It participates in pyrimidine metabolism; CTP biosynthesis via de novo pathway; CTP from UDP: step 2/2. With respect to regulation, allosterically activated by GTP, when glutamine is the substrate; GTP has no effect on the reaction when ammonia is the substrate. The allosteric effector GTP functions by stabilizing the protein conformation that binds the tetrahedral intermediate(s) formed during glutamine hydrolysis. Inhibited by the product CTP, via allosteric rather than competitive inhibition. Catalyzes the ATP-dependent amination of UTP to CTP with either L-glutamine or ammonia as the source of nitrogen. Regulates intracellular CTP levels through interactions with the four ribonucleotide triphosphates. This Cupriavidus pinatubonensis (strain JMP 134 / LMG 1197) (Cupriavidus necator (strain JMP 134)) protein is CTP synthase.